Here is a 161-residue protein sequence, read N- to C-terminus: Peroxynitrite isomerase 2 (161 aa).

The GXWXGXG motif lies at 17 to 23 (GTWTGRG). Residue H152 participates in heme b binding.

This sequence belongs to the nitrobindin family. Homodimer. Heme b is required as a cofactor.

The catalysed reaction is peroxynitrite = nitrate. Its pathway is nitrogen metabolism. Heme-binding protein able to scavenge peroxynitrite and to protect free L-tyrosine against peroxynitrite-mediated nitration, by acting as a peroxynitrite isomerase that converts peroxynitrite to nitrate. Therefore, this protein likely plays a role in peroxynitrite sensing and in the detoxification of reactive nitrogen and oxygen species (RNS and ROS, respectively). Is able to bind nitric oxide (NO) in vitro, but may act as a sensor of peroxynitrite levels in vivo. The sequence is that of Peroxynitrite isomerase 2 from Mycobacterium avium (strain 104).